Here is a 167-residue protein sequence, read N- to C-terminus: MLIFEDVISGDELLSDAYDVKLVDGAVYEADCAMVTVGNGDIDIGANPSAEDGEEALEDGAETVNNVVYSFRLQPTMFDKKSFTTYIKGYMKRIKAYLAENDPDSVEAFEKGATAYVKKVLGSFKDWEFYTGESMDPDAMVVLLNYREDGTTPYVAIWKHGVKENKI.

The TCTP domain occupies 1-167; the sequence is MLIFEDVISG…WKHGVKENKI (167 aa).

Belongs to the TCTP family.

Its subcellular location is the cytoplasm. It localises to the cytoskeleton. Functionally, involved in protein synthesis. Involved in microtubule stabilization. In Candida albicans (strain SC5314 / ATCC MYA-2876) (Yeast), this protein is Translationally-controlled tumor protein homolog (TMA19).